The primary structure comprises 402 residues: 1-deoxy-D-xylulose 5-phosphate reductoisomerase (402 aa).

T13, G14, S15, I16, and N126 together coordinate NADPH. K127 is a 1-deoxy-D-xylulose 5-phosphate binding site. NADPH is bound at residue E128. D152 contributes to the Mn(2+) binding site. The 1-deoxy-D-xylulose 5-phosphate site is built by S153, E154, S188, and H211. E154 serves as a coordination point for Mn(2+). G217 is a binding site for NADPH. Residues S224, N229, K230, and E233 each contribute to the 1-deoxy-D-xylulose 5-phosphate site. E233 lines the Mn(2+) pocket.

It belongs to the DXR family. It depends on Mg(2+) as a cofactor. Requires Mn(2+) as cofactor.

The enzyme catalyses 2-C-methyl-D-erythritol 4-phosphate + NADP(+) = 1-deoxy-D-xylulose 5-phosphate + NADPH + H(+). The protein operates within isoprenoid biosynthesis; isopentenyl diphosphate biosynthesis via DXP pathway; isopentenyl diphosphate from 1-deoxy-D-xylulose 5-phosphate: step 1/6. Catalyzes the NADPH-dependent rearrangement and reduction of 1-deoxy-D-xylulose-5-phosphate (DXP) to 2-C-methyl-D-erythritol 4-phosphate (MEP). The sequence is that of 1-deoxy-D-xylulose 5-phosphate reductoisomerase from Psychrobacter cryohalolentis (strain ATCC BAA-1226 / DSM 17306 / VKM B-2378 / K5).